Here is a 655-residue protein sequence, read N- to C-terminus: Alpha-L-iduronidase (655 aa).

An N-terminal signal peptide occupies residues 1–25 (MRPPGPRAPGLALLAALLAAPRALA). Alpha-D-mannopyranose contacts are provided by Pro-53, Leu-55, and His-57. Residue His-90 coordinates alpha-L-iduronate. An N-linked (GlcNAc...) asparagine glycan is attached at Asn-109. Residues Asn-180 and Glu-181 each coordinate alpha-L-iduronate. Glu-181 serves as the catalytic Proton donor. N-linked (GlcNAc...) asparagine glycosylation is found at Asn-189 and Asn-242. Residues Lys-263, Glu-298, and Gly-304 each contribute to the alpha-L-iduronate site. The Nucleophile role is filled by Glu-298. Trp-305 contacts alpha-D-mannopyranose. N-linked (GlcNAc...) asparagine glycosylation is present at Asn-335. Alpha-L-iduronate contacts are provided by Asp-348 and Arg-362. Asn-371 and Asn-414 each carry an N-linked (GlcNAc...) asparagine glycan. Cys-540 and Cys-576 are oxidised to a cystine.

This sequence belongs to the glycosyl hydrolase 39 family. Monomer. Post-translationally, a smaller 63 kDa protein probably arises from IDUA protein by proteolytic cleavage. N-glycosylation contributes to substrate binding and is required for full enzymatic activity. As to expression, detected in testis (at protein level). Expressed ubiquitously.

Its subcellular location is the lysosome. It carries out the reaction Hydrolysis of unsulfated alpha-L-iduronosidic linkages in dermatan sulfate.. This is Alpha-L-iduronidase (IDUA) from Canis lupus familiaris (Dog).